Reading from the N-terminus, the 122-residue chain is Large ribosomal subunit protein uL14 (122 aa).

This sequence belongs to the universal ribosomal protein uL14 family. Part of the 50S ribosomal subunit. Forms a cluster with proteins L3 and L19. In the 70S ribosome, L14 and L19 interact and together make contacts with the 16S rRNA in bridges B5 and B8.

Binds to 23S rRNA. Forms part of two intersubunit bridges in the 70S ribosome. This is Large ribosomal subunit protein uL14 from Streptococcus suis (strain 05ZYH33).